The chain runs to 227 residues: Cytochrome c oxidase subunit 2 (227 aa).

The Mitochondrial intermembrane segment spans residues 1–14 (MAYPMQLGFQDATS). The helical transmembrane segment at 15 to 45 (PIMEELLHFHDHTLMIVLLISSLVLYIISLM) threads the bilayer. Residues 46–59 (LTTKLTHTSTMDAQ) are Mitochondrial matrix-facing. The chain crosses the membrane as a helical span at residues 60 to 87 (EVETIWTILPAIILILIALPSLRILYMM). The Mitochondrial intermembrane portion of the chain corresponds to 88–227 (DEINNPSLTV…YFEKWSASML (140 aa)). 6 residues coordinate Cu cation: His-161, Cys-196, Glu-198, Cys-200, His-204, and Met-207. Glu-198 contributes to the Mg(2+) binding site. Tyr-218 carries the post-translational modification Phosphotyrosine.

This sequence belongs to the cytochrome c oxidase subunit 2 family. As to quaternary structure, component of the cytochrome c oxidase (complex IV, CIV), a multisubunit enzyme composed of 14 subunits. The complex is composed of a catalytic core of 3 subunits MT-CO1, MT-CO2 and MT-CO3, encoded in the mitochondrial DNA, and 11 supernumerary subunits COX4I, COX5A, COX5B, COX6A, COX6B, COX6C, COX7A, COX7B, COX7C, COX8 and NDUFA4, which are encoded in the nuclear genome. The complex exists as a monomer or a dimer and forms supercomplexes (SCs) in the inner mitochondrial membrane with NADH-ubiquinone oxidoreductase (complex I, CI) and ubiquinol-cytochrome c oxidoreductase (cytochrome b-c1 complex, complex III, CIII), resulting in different assemblies (supercomplex SCI(1)III(2)IV(1) and megacomplex MCI(2)III(2)IV(2)). Found in a complex with TMEM177, COA6, COX18, COX20, SCO1 and SCO2. Interacts with TMEM177 in a COX20-dependent manner. Interacts with COX20. Interacts with COX16. Cu cation serves as cofactor.

It localises to the mitochondrion inner membrane. It catalyses the reaction 4 Fe(II)-[cytochrome c] + O2 + 8 H(+)(in) = 4 Fe(III)-[cytochrome c] + 2 H2O + 4 H(+)(out). Functionally, component of the cytochrome c oxidase, the last enzyme in the mitochondrial electron transport chain which drives oxidative phosphorylation. The respiratory chain contains 3 multisubunit complexes succinate dehydrogenase (complex II, CII), ubiquinol-cytochrome c oxidoreductase (cytochrome b-c1 complex, complex III, CIII) and cytochrome c oxidase (complex IV, CIV), that cooperate to transfer electrons derived from NADH and succinate to molecular oxygen, creating an electrochemical gradient over the inner membrane that drives transmembrane transport and the ATP synthase. Cytochrome c oxidase is the component of the respiratory chain that catalyzes the reduction of oxygen to water. Electrons originating from reduced cytochrome c in the intermembrane space (IMS) are transferred via the dinuclear copper A center (CU(A)) of subunit 2 and heme A of subunit 1 to the active site in subunit 1, a binuclear center (BNC) formed by heme A3 and copper B (CU(B)). The BNC reduces molecular oxygen to 2 water molecules using 4 electrons from cytochrome c in the IMS and 4 protons from the mitochondrial matrix. The sequence is that of Cytochrome c oxidase subunit 2 (MT-CO2) from Bubalus depressicornis (Lowland anoa).